The following is a 150-amino-acid chain: Leukotriene C4 synthase (150 aa).

The Cytoplasmic portion of the chain corresponds to 1-6 (MKDEVA). The helical transmembrane segment at 7–27 (LLATVTLLGVLLQAYFSLQVI) threads the bilayer. The Lumenal portion of the chain corresponds to 28–48 (RARRAHRVSPPLTTGPPEFER). Arg30 is a binding site for glutathione. Arg31 acts as the Proton donor in catalysis. At Ser36 the chain carries Phosphoserine. A helical membrane pass occupies residues 49–69 (VYRAQVNCSEYFPLFLATLWV). Residues 51 to 55 (RAQVN) and 58 to 59 (EY) contribute to the glutathione site. Topologically, residues 70–73 (AGVY) are cytoplasmic. A helical transmembrane segment spans residues 74 to 94 (FHEGAAALCGLVYLFTRLRYF). 93–97 (YFWGY) contacts glutathione. Residues 95-104 (WGYARSAQLR) are Lumenal-facing. Arg104 acts as the Proton acceptor in catalysis. Residues 105 to 124 (LAPLYASARALWLLLALATL) traverse the membrane as a helical segment. The Cytoplasmic portion of the chain corresponds to 125 to 150 (GLLAHFLPAAARAALLRLLRALLRTA).

It belongs to the MAPEG family. As to quaternary structure, homotrimer. Interacts with ALOX5AP and ALOX5. Phosphorylation at Ser-36 by RPS6KB1 inhibits the leukotriene-C4 synthase activity.

It is found in the nucleus outer membrane. It localises to the endoplasmic reticulum membrane. The protein resides in the nucleus membrane. The enzyme catalyses leukotriene C4 = leukotriene A4 + glutathione. The catalysed reaction is (13S,14S)-epoxy-(4Z,7Z,9E,11E,16Z,19Z)-docosahexaenoate + glutathione = (13R)-S-glutathionyl-(14S)-hydroxy-(4Z,7Z,9E,11E,16Z,19Z)-docosahexaenoate. It functions in the pathway lipid metabolism; leukotriene C4 biosynthesis. Inhibited by MK886. In terms of biological role, catalyzes the conjugation of leukotriene A4 with reduced glutathione (GSH) to form leukotriene C4 with high specificity. Can also catalyze the transfer of a glutathionyl group from glutathione (GSH) to 13(S),14(S)-epoxy-docosahexaenoic acid to form maresin conjugate in tissue regeneration 1 (MCTR1), a bioactive lipid mediator that possess potent anti-inflammatory and proresolving actions. The sequence is that of Leukotriene C4 synthase (LTC4S) from Cavia porcellus (Guinea pig).